Consider the following 100-residue polypeptide: Small ribosomal subunit protein uS14c (100 aa).

A compositionally biased stretch (basic and acidic residues) spans 28 to 45 (KKEIKKVPSLSEKMEIHG). Positions 28 to 59 (KKEIKKVPSLSEKMEIHGKLQSPPRNSAPTRL) are disordered.

The protein belongs to the universal ribosomal protein uS14 family. Part of the 30S ribosomal subunit.

Its subcellular location is the plastid. The protein localises to the chloroplast. Binds 16S rRNA, required for the assembly of 30S particles. The chain is Small ribosomal subunit protein uS14c from Nandina domestica (Heavenly bamboo).